The chain runs to 450 residues: Bifunctional protein GlmU (450 aa).

The tract at residues 1-229 (MRRHAIILAA…VEEIMGVNDR (229 aa)) is pyrophosphorylase. UDP-N-acetyl-alpha-D-glucosamine-binding positions include 8–11 (LAAG), lysine 22, glutamine 72, and 77–78 (GT). Residue aspartate 102 coordinates Mg(2+). The UDP-N-acetyl-alpha-D-glucosamine site is built by glycine 139, glutamate 154, and asparagine 227. Asparagine 227 is a binding site for Mg(2+). Residues 230–250 (VMLSQAEKAMQRRTNHYHMLN) are linker. Residues 251 to 450 (GVTIIDPDST…RQTTKEGYRK (200 aa)) form an N-acetyltransferase region. Residues arginine 332 and lysine 350 each contribute to the UDP-N-acetyl-alpha-D-glucosamine site. The Proton acceptor role is filled by histidine 362. Residues tyrosine 365 and asparagine 376 each contribute to the UDP-N-acetyl-alpha-D-glucosamine site. Acetyl-CoA contacts are provided by residues 385 to 386 (NY), alanine 422, and arginine 439.

It in the N-terminal section; belongs to the N-acetylglucosamine-1-phosphate uridyltransferase family. In the C-terminal section; belongs to the transferase hexapeptide repeat family. As to quaternary structure, homotrimer. The cofactor is Mg(2+).

It localises to the cytoplasm. The enzyme catalyses alpha-D-glucosamine 1-phosphate + acetyl-CoA = N-acetyl-alpha-D-glucosamine 1-phosphate + CoA + H(+). It catalyses the reaction N-acetyl-alpha-D-glucosamine 1-phosphate + UTP + H(+) = UDP-N-acetyl-alpha-D-glucosamine + diphosphate. It functions in the pathway nucleotide-sugar biosynthesis; UDP-N-acetyl-alpha-D-glucosamine biosynthesis; N-acetyl-alpha-D-glucosamine 1-phosphate from alpha-D-glucosamine 6-phosphate (route II): step 2/2. It participates in nucleotide-sugar biosynthesis; UDP-N-acetyl-alpha-D-glucosamine biosynthesis; UDP-N-acetyl-alpha-D-glucosamine from N-acetyl-alpha-D-glucosamine 1-phosphate: step 1/1. The protein operates within bacterial outer membrane biogenesis; LPS lipid A biosynthesis. Functionally, catalyzes the last two sequential reactions in the de novo biosynthetic pathway for UDP-N-acetylglucosamine (UDP-GlcNAc). The C-terminal domain catalyzes the transfer of acetyl group from acetyl coenzyme A to glucosamine-1-phosphate (GlcN-1-P) to produce N-acetylglucosamine-1-phosphate (GlcNAc-1-P), which is converted into UDP-GlcNAc by the transfer of uridine 5-monophosphate (from uridine 5-triphosphate), a reaction catalyzed by the N-terminal domain. The polypeptide is Bifunctional protein GlmU (Staphylococcus aureus (strain NCTC 8325 / PS 47)).